Reading from the N-terminus, the 169-residue chain is Lutropin/choriogonadotropin subunit beta (169 aa).

A signal peptide spans 1–20 (METLQGLLLWMLLSVGGVWA). Cystine bridges form between cysteine 29–cysteine 77, cysteine 43–cysteine 92, cysteine 46–cysteine 130, cysteine 54–cysteine 108, cysteine 58–cysteine 110, and cysteine 113–cysteine 120. The N-linked (GlcNAc...) asparagine glycan is linked to asparagine 33. Residues 131–169 (APQASSSSKDPPSQPLTSTSTPTPGASRRSSHPLPIKTS) are disordered. O-linked (GalNAc...) serine glycosylation is found at serine 138 and serine 143. The segment covering 145 to 158 (PLTSTSTPTPGASR) has biased composition (low complexity). O-linked (GalNAc...) threonine glycosylation occurs at threonine 147. The O-linked (GalNAc...) serine glycan is linked to serine 148. O-linked (GalNAc...) threonine glycosylation occurs at threonine 149. A glycan (O-linked (GalNAc...) serine) is linked at serine 150. O-linked (GalNAc...) threonine glycosylation is found at threonine 151 and threonine 153. Serine 157, serine 160, serine 161, and serine 169 each carry an O-linked (GalNAc...) serine glycan.

The protein belongs to the glycoprotein hormones subunit beta family. As to quaternary structure, heterodimer of a common alpha chain and a unique beta chain which confers biological specificity to thyrotropin, lutropin, follitropin and gonadotropin. In terms of processing, microheterogeneity at Asn-33. O-glycosylation appears to be responsible for the beta subunit contribution to the difference in LH-receptor binding activity between LSH-B and CG-B.

It localises to the secreted. Its function is as follows. Promotes spermatogenesis and ovulation by stimulating the testes and ovaries to synthesize steroids. The polypeptide is Lutropin/choriogonadotropin subunit beta (LHB) (Equus caballus (Horse)).